Here is a 547-residue protein sequence, read N- to C-terminus: ATP synthase subunit alpha (547 aa).

172 to 179 contacts ATP; the sequence is GDRKTGKT.

The protein belongs to the ATPase alpha/beta chains family. As to quaternary structure, F-type ATPases have 2 components, CF(1) - the catalytic core - and CF(0) - the membrane proton channel. CF(1) has five subunits: alpha(3), beta(3), gamma(1), delta(1), epsilon(1). CF(0) has three main subunits: a(1), b(2) and c(9-12). The alpha and beta chains form an alternating ring which encloses part of the gamma chain. CF(1) is attached to CF(0) by a central stalk formed by the gamma and epsilon chains, while a peripheral stalk is formed by the delta and b chains.

It is found in the cell membrane. It carries out the reaction ATP + H2O + 4 H(+)(in) = ADP + phosphate + 5 H(+)(out). Functionally, produces ATP from ADP in the presence of a proton gradient across the membrane. The alpha chain is a regulatory subunit. In Rhodococcus opacus (strain B4), this protein is ATP synthase subunit alpha.